The following is a 356-amino-acid chain: Neutral protease 2 homolog MEP5 (356 aa).

The N-terminal stretch at 1-19 (MRVSSSLIALAALAVQALA) is a signal peptide. Residues 20–179 (LPVNELAERD…ASAIPELDKR (160 aa)) constitute a propeptide that is removed on maturation. 2 cysteine pairs are disulfide-bonded: cysteine 187–cysteine 259 and cysteine 266–cysteine 284. Histidine 308 serves as a coordination point for Zn(2+). Residue glutamate 309 is part of the active site. Residues histidine 312 and aspartate 323 each contribute to the Zn(2+) site.

Belongs to the peptidase M35 family. Zn(2+) serves as cofactor.

The protein localises to the secreted. The catalysed reaction is Preferential cleavage of bonds with hydrophobic residues in P1'. Also 3-Asn-|-Gln-4 and 8-Gly-|-Ser-9 bonds in insulin B chain.. In terms of biological role, secreted metalloproteinase that allows assimilation of proteinaceous substrates. Shows high activities on basic nuclear substrates such as histone and protamine. May be involved in virulence. This is Neutral protease 2 homolog MEP5 (MEP5) from Coccidioides posadasii (strain C735) (Valley fever fungus).